The following is a 356-amino-acid chain: Dihydroorotate dehydrogenase (quinone) (356 aa).

FMN contacts are provided by residues 67–71 and threonine 91; that span reads PGFDK. Position 71 (lysine 71) interacts with substrate. 116–120 is a binding site for substrate; that stretch reads NRMGF. The FMN site is built by asparagine 147 and asparagine 178. Asparagine 178 is a binding site for substrate. The active-site Nucleophile is serine 181. Asparagine 183 contributes to the substrate binding site. Positions 218 and 246 each coordinate FMN. 247–248 contacts substrate; sequence NT. FMN-binding positions include glycine 268, glycine 297, and 318-319; that span reads YS.

It belongs to the dihydroorotate dehydrogenase family. Type 2 subfamily. In terms of assembly, monomer. It depends on FMN as a cofactor.

The protein resides in the cell membrane. The catalysed reaction is (S)-dihydroorotate + a quinone = orotate + a quinol. Its pathway is pyrimidine metabolism; UMP biosynthesis via de novo pathway; orotate from (S)-dihydroorotate (quinone route): step 1/1. Its function is as follows. Catalyzes the conversion of dihydroorotate to orotate with quinone as electron acceptor. The sequence is that of Dihydroorotate dehydrogenase (quinone) from Sphingopyxis alaskensis (strain DSM 13593 / LMG 18877 / RB2256) (Sphingomonas alaskensis).